The sequence spans 87 residues: Small ribosomal subunit protein bS20 (87 aa).

Residues 1–22 are disordered; sequence MANSPQAKKRARQNEKRFAINK.

The protein belongs to the bacterial ribosomal protein bS20 family.

Binds directly to 16S ribosomal RNA. The chain is Small ribosomal subunit protein bS20 from Ruegeria sp. (strain TM1040) (Silicibacter sp.).